Here is a 200-residue protein sequence, read N- to C-terminus: MAFELPALPYAHDALASLGMSKETLEYHHDLHHKAYVDNGNKLIAGTEWEGKSVEEIVKGTYCAGAVAQSGIFNNASQHWNHAQFWEMMGPGEDKKMPGALEKALVESFGSVAKFKEDFAAAGAGQFGSGWAWLVKDSDGALKITKTENGVNPLCFGQTALLGCDVWEHSYYIDFRNKRPAYLTNFLDKLVNWENVASRM.

Fe cation is bound by residues His28, His82, Asp165, and His169.

The protein belongs to the iron/manganese superoxide dismutase family. In terms of assembly, homodimer. The cofactor is Fe cation.

The enzyme catalyses 2 superoxide + 2 H(+) = H2O2 + O2. Destroys superoxide anion radicals which are normally produced within the cells and which are toxic to biological systems. This is Superoxide dismutase [Fe] (sodB) from Rhodobacter capsulatus (Rhodopseudomonas capsulata).